A 127-amino-acid chain; its full sequence is Small ribosomal subunit protein uS13 (127 aa).

The interval 96-127 (LPCHGQRTSTNARTRKGPKRTAVKKKGAAKKK) is disordered. Basic residues predominate over residues 108-127 (RTRKGPKRTAVKKKGAAKKK).

This sequence belongs to the universal ribosomal protein uS13 family. As to quaternary structure, part of the 30S ribosomal subunit. Forms a loose heterodimer with protein S19. Forms two bridges to the 50S subunit in the 70S ribosome.

In terms of biological role, located at the top of the head of the 30S subunit, it contacts several helices of the 16S rRNA. In the 70S ribosome it contacts the 23S rRNA (bridge B1a) and protein L5 of the 50S subunit (bridge B1b), connecting the 2 subunits; these bridges are implicated in subunit movement. Contacts the tRNAs in the A and P-sites. In Desulfosudis oleivorans (strain DSM 6200 / JCM 39069 / Hxd3) (Desulfococcus oleovorans), this protein is Small ribosomal subunit protein uS13.